Consider the following 413-residue polypeptide: S-adenosylmethionine synthase (413 aa).

ATP is bound at residue His-15. Asp-17 is a Mg(2+) binding site. Glu-43 contacts K(+). 2 residues coordinate L-methionine: Glu-56 and Gln-100. A flexible loop region spans residues 100 to 110 (QSPDISQGVNE). ATP-binding positions include 171–173 (DGK), 248–249 (KF), Asp-257, 263–264 (RK), Ala-280, and Lys-284. Asp-257 contributes to the L-methionine binding site. Lys-288 contacts L-methionine.

Belongs to the AdoMet synthase family. Homotetramer; dimer of dimers. It depends on Mg(2+) as a cofactor. Requires K(+) as cofactor.

The protein resides in the cytoplasm. The enzyme catalyses L-methionine + ATP + H2O = S-adenosyl-L-methionine + phosphate + diphosphate. The protein operates within amino-acid biosynthesis; S-adenosyl-L-methionine biosynthesis; S-adenosyl-L-methionine from L-methionine: step 1/1. In terms of biological role, catalyzes the formation of S-adenosylmethionine (AdoMet) from methionine and ATP. The overall synthetic reaction is composed of two sequential steps, AdoMet formation and the subsequent tripolyphosphate hydrolysis which occurs prior to release of AdoMet from the enzyme. This chain is S-adenosylmethionine synthase, found in Prochlorococcus marinus (strain AS9601).